The sequence spans 346 residues: D-amino-acid oxidase (346 aa).

FAD contacts are provided by glycine 22, isoleucine 24, threonine 52, threonine 53, serine 54, alanine 58, alanine 59, leucine 60, and threonine 187. 2 residues coordinate D-proline: tyrosine 227 and arginine 284. Residues tyrosine 227 and arginine 284 each contribute to the D-serine site. Positions 284, 311, 312, 314, and 316 each coordinate FAD. A D-dopa-binding site is contributed by arginine 284. D-proline is bound at residue glycine 312. Residue glycine 312 participates in D-serine binding. A D-dopa-binding site is contributed by glycine 312. Residues 344-346 (SKL) carry the Microbody targeting signal motif.

Belongs to the DAMOX/DASOX family. The cofactor is FAD.

It is found in the peroxisome matrix. The catalysed reaction is a D-alpha-amino acid + O2 + H2O = a 2-oxocarboxylate + H2O2 + NH4(+). It carries out the reaction D-serine + O2 + H2O = 3-hydroxypyruvate + H2O2 + NH4(+). The enzyme catalyses D-phenylalanine + O2 + H2O = 3-phenylpyruvate + H2O2 + NH4(+). It catalyses the reaction D-alanine + O2 + H2O = pyruvate + H2O2 + NH4(+). The catalysed reaction is D-arginine + O2 + H2O = 5-guanidino-2-oxopentanoate + H2O2 + NH4(+). It carries out the reaction D-methionine + O2 + H2O = 4-methylsulfanyl-2-oxobutanoate + H2O2 + NH4(+). The enzyme catalyses D-ornithine + O2 + H2O = 5-amino-2-oxopentanoate + H2O2 + NH4(+). It catalyses the reaction D-leucine + O2 + H2O = 4-methyl-2-oxopentanoate + H2O2 + NH4(+). The catalysed reaction is D-lysine + O2 + H2O = 6-amino-2-oxohexanoate + H2O2 + NH4(+). It carries out the reaction D-proline + O2 = 1-pyrroline-2-carboxylate + H2O2. The enzyme catalyses D-valine + O2 + H2O = 3-methyl-2-oxobutanoate + H2O2 + NH4(+). It catalyses the reaction D-histidine + O2 + H2O = 3-(imidazol-5-yl)pyruvate + H2O2 + NH4(+). In terms of biological role, catalyzes the oxidative deamination of D-amino acids with broad substrate specificity. Has low in vitro and no in vivo activity on D-serine; primary D-serine degradation is performed by the D-serine dehydratase dsd. The sequence is that of D-amino-acid oxidase (ddo-1) from Dictyostelium discoideum (Social amoeba).